The sequence spans 390 residues: Isotocin receptor (390 aa).

Over 1–48 (MEEMFKEQDFWSFNESSRNSTVGNETFGGNQTVNPLKRNEEVAKVEVT) the chain is Extracellular. 4 N-linked (GlcNAc...) asparagine glycosylation sites follow: Asn14, Asn19, Asn24, and Asn30. A helical membrane pass occupies residues 49–69 (VLALVLFLALAGNLCVLIAIY). Over 70–86 (TAKHTQSRMYYLMKHLS) the chain is Cytoplasmic. A helical transmembrane segment spans residues 87–107 (IADLVVAVFQVLPQLIWDITF). The Extracellular portion of the chain corresponds to 108–124 (RFYGPDFLCRLVKYLQT). A disulfide bridge connects residues Cys116 and Cys191. The helical transmembrane segment at 125 to 145 (VGMFASTYMLVLMSIDRCIAI) threads the bilayer. The Cytoplasmic portion of the chain corresponds to 146–160 (CQPLRSLHKRKDRCY). The helical transmembrane segment at 161–181 (VIVSWALSLVFSVPQVYIFSL) threads the bilayer. Topologically, residues 182-206 (REIGNGVYDCWGDFVQPWGAKAYIT) are extracellular. A helical membrane pass occupies residues 207 to 227 (WISLTIYIIPVAILGGCYGLI). The Cytoplasmic portion of the chain corresponds to 228 to 276 (SFKIWQNFKRKTKKDQCITLTTAASKANALARVSSVKLVSKAKITTVKM). Residues 277 to 297 (TFVIVLAYIVCWTPFFFVQMW) traverse the membrane as a helical segment. Residues 298-311 (SAWDPEAPREAMPF) are Extracellular-facing. The helical transmembrane segment at 312–332 (IISMLLASLNSCCNPWIYMFF) threads the bilayer. Residues 333-390 (AGHLFHDLKQSLLCCSTLYLKSSQCRCDQEHDSRKSNCSTYVIKSTSSQRSITQSSIT) are Cytoplasmic-facing.

It belongs to the G-protein coupled receptor 1 family. Vasopressin/oxytocin receptor subfamily. Expressed in brain, intestine, bladder, skeletal muscle, lateral line, gills and kidney.

The protein localises to the cell membrane. In terms of biological role, binds to isotocin. Can also be activated by vasotocin, mesotocin, oxytocin and Arg-vasopressin, although these have lower potencies than isotocin. Produces an induction of membrane chloride currents indicating that it is coupled to the inositol phosphate/calcium pathway. The polypeptide is Isotocin receptor (Catostomus commersonii (White sucker)).